The chain runs to 293 residues: Methylsterol monooxygenase 1 (293 aa).

Helical transmembrane passes span 55–75 and 100–120; these read LIVHEALYFFFCLPGFLFQFI and VLLFNHFCIQFPLICGTYYFT. Residues 145–274 form the Fatty acid hydroxylase domain; that stretch reads CAVIEDTWHY…FTWWDRIFGT (130 aa). The short motif at 157–161 is the Histidine box-1 element; that stretch reads HRLLH. A Histidine box-2 motif is present at residues 170–174; sequence HKIHH. The chain crosses the membrane as a helical span at residues 199–219; it reads FFIGIMLLCDHVILLWAWVTV. Residues 249-255 carry the Histidine box-3 motif; the sequence is HHDFHHM.

The protein belongs to the sterol desaturase family. Fe cation is required as a cofactor. Ubiquitinated by MARCHF6, leading to proteasomal degradation.

It is found in the endoplasmic reticulum membrane. The enzyme catalyses 4,4-dimethyl-5alpha-cholest-7-en-3beta-ol + 6 Fe(II)-[cytochrome b5] + 3 O2 + 5 H(+) = 4alpha-carboxy-4beta-methyl-5alpha-cholest-7-ene-3beta-ol + 6 Fe(III)-[cytochrome b5] + 4 H2O. It carries out the reaction 4,4-dimethyl-5alpha-cholesta-8,24-dien-3beta-ol + 6 Fe(II)-[cytochrome b5] + 3 O2 + 5 H(+) = 4beta-methylzymosterol-4alpha-carboxylate + 6 Fe(III)-[cytochrome b5] + 4 H2O. It catalyses the reaction 4alpha-methylzymosterol + 6 Fe(II)-[cytochrome b5] + 3 O2 + 5 H(+) = 4alpha-carboxyzymosterol + 6 Fe(III)-[cytochrome b5] + 4 H2O. The catalysed reaction is 4alpha-methyl-5alpha-cholest-7-en-3beta-ol + 6 Fe(II)-[cytochrome b5] + 3 O2 + 5 H(+) = 4alpha-carboxy-5alpha-cholest-7-en-3beta-ol + 6 Fe(III)-[cytochrome b5] + 4 H2O. The enzyme catalyses 4,4-dimethyl-5alpha-cholest-8-en-3beta-ol + 6 Fe(II)-[cytochrome b5] + 3 O2 + 5 H(+) = 4alpha-carboxy-4beta-methyl-5alpha-cholest-8-en-3beta-ol + 6 Fe(III)-[cytochrome b5] + 4 H2O. It carries out the reaction 4alpha-methyl-5alpha-cholest-8-en-3beta-ol + 6 Fe(II)-[cytochrome b5] + 3 O2 + 5 H(+) = 4alpha-carboxy-5alpha-cholest-8-ene-3beta-ol + 6 Fe(III)-[cytochrome b5] + 4 H2O. It participates in steroid biosynthesis; zymosterol biosynthesis; zymosterol from lanosterol: step 3/6. It functions in the pathway steroid biosynthesis; cholesterol biosynthesis. Its function is as follows. Catalyzes the three-step monooxygenation required for the demethylation of 4,4-dimethyl and 4alpha-methylsterols, which can be subsequently metabolized to cholesterol. This chain is Methylsterol monooxygenase 1 (MSMO1), found in Sus scrofa (Pig).